The following is a 403-amino-acid chain: MSKFNRIHLVVLDSVGIGAAPDANNFVNAGVPDGASDTLGHISKTVGLNVPNMAKIGLGNIPRETPLKTVAAESNPTGYATKLEEVSLGKDTMTGHWEIMGLNITEPFDTFWNGFPEEILTKIEEFSGRKVIREANKPYSGTAVIDDFGPRQMETGELIIYTSADPVLQIAAHEDIIPLDELYRICEYARSITLERPALLGRIIARPYVGEPGNFTRTANRRDLAVSPFSPTVLDKLNEAGIDTYAVGKINDIFNGAGINHDMGHNKSNSHGIDTLLKTMGLAEFEKGFSFTNLVDFDALYGHRRNAHGYRDCLHEFDERLPEIIAAMRENDLLLITADHGNDPTYAGTDHTREYIPLLAYSPAFKGNGLIPVGHFADISATVADNFGVETAMIGESFLDKLV.

Residues aspartate 13, aspartate 298, histidine 303, aspartate 339, histidine 340, and histidine 351 each contribute to the Mn(2+) site.

This sequence belongs to the phosphopentomutase family. Mn(2+) serves as cofactor.

The protein localises to the cytoplasm. The catalysed reaction is 2-deoxy-alpha-D-ribose 1-phosphate = 2-deoxy-D-ribose 5-phosphate. It catalyses the reaction alpha-D-ribose 1-phosphate = D-ribose 5-phosphate. It participates in carbohydrate degradation; 2-deoxy-D-ribose 1-phosphate degradation; D-glyceraldehyde 3-phosphate and acetaldehyde from 2-deoxy-alpha-D-ribose 1-phosphate: step 1/2. In terms of biological role, isomerase that catalyzes the conversion of deoxy-ribose 1-phosphate (dRib-1-P) and ribose 1-phosphate (Rib-1-P) to deoxy-ribose 5-phosphate (dRib-5-P) and ribose 5-phosphate (Rib-5-P), respectively. The sequence is that of Phosphopentomutase from Streptococcus pneumoniae (strain JJA).